We begin with the raw amino-acid sequence, 932 residues long: Calpain-like protease palB/cpr-8 (932 aa).

The 324-residue stretch at 96 to 419 (KLHGNIFPPW…FDSLYVNWSP (324 aa)) folds into the Calpain catalytic domain. Residues C178, H346, and N366 contribute to the active site. The segment at 890–932 (QGHVTEGSDDDGGGGGGGGGGVHVEISSDGVVSIGEWEVADED) is disordered. Over residues 902–911 (GGGGGGGGGV) the composition is skewed to gly residues.

It belongs to the peptidase C2 family. PalB/RIM13 subfamily.

Its function is as follows. Required for the proteolytic cleavage of the transcription factor pacc-1 in response to alkaline ambient pH. The sequence is that of Calpain-like protease palB/cpr-8 (cpr-8) from Neurospora crassa (strain ATCC 24698 / 74-OR23-1A / CBS 708.71 / DSM 1257 / FGSC 987).